Consider the following 70-residue polypeptide: Eglin C (70 aa).

Belongs to the protease inhibitor I13 (potato type I serine protease inhibitor) family.

Functionally, inhibits both elastase and cathepsin G. This chain is Eglin C, found in Hirudo medicinalis (Medicinal leech).